Reading from the N-terminus, the 1958-residue chain is MFSLPSFLTTFSFTLPSLPSISLPANIQRRFLSYVLKRTLGRFVSHQALDAERIQAQVSEGWVEIENLEIECSEINNYIPPPLPLSLTSGTINKLTAKLPFPNLWSDPLQVSLDTLTLDFTLSSPSPLSRGRAATRPEHHDLAESVTSAADDFLHHELDAYEEKELEGSIRQSLILSQTDPFISDVPGGFPLGSPGEISPGRPLPANMESTTVLAGMVERILARLEFRVEKIKIRLVIEDEEDVVELTVGRIRYADESEAQTNDDGKSTTRAIRISNISLDIVPSQRKPPSLVIPQRQSLEPSVSSSTSTASTSSGNDYSDMFMSQAVVDLRQSLLTPEQISEPANEQTVHESNMFYSALSQPNESEPGASTGIKRSGISQNPKLADEIEEERSRSETPTPETKPQPSGIPVLSFGQEDVVLHMRTTRPLISAGHQTSFNDNKPTVEMNITIGTITTVLLPSHLKLFISALQTLQALCQKDDVPAAKDKPAQSTSPQTRLTATTKLKAFYVSLVYDLSAETSLNLHSTMASHLTRPTNPIPYPHLRFRLDTLVASYQSPGHSNPSRPAFTRPTPNMSTANLRRKSSGHARFGSLPSNLTVNVGDISLFEWMGEGMIAPVILFDPGLKHQYDLPSAPPHKGQAGFPECECRDWREEKKTGSEKAWRVRPRGRGILKGGARATTEDEGPVVHVRQDLGSDSAAVINLQSLHVFVDLSLIERLLPLLRSVTPLIHPPEPTPAWLQSVPSQSISEEITPESIISSLSAPPPTARGKKMKADIRCDLVRLSVRCPAPPPEPAERQIGDGRQLRSGIVFVDVHGLKSRFMDTSRTGTRPASSEVANVEFEQTLIFFASVSQHYAYPFLIFAPLSPEPGEEDIPLLPSISLSSFPQASSLPASSIAKTTLVTCKMPAIRASVHHPTVTGLQYFADDVTRWLDVAFADGSAKPRDELKMIGSRFFGGSKGSEASSEIDEPYDVEEVAAGMKVEIEISEIDMGLYVPRLDASGERVFSFKANDLGVRMETHPEENETALELSIMDLDFSDVSSTPLRILGRTTPFTLTSHQAPVVYLRFVSSTDLRTTLKESNISVALSHFTFAVHKEIAWLHEIAQFAKPPKGVFENLSPTDLTRLSINLSSASFLLVPPNLPGSIVILVREVEGKTEIPKGATDSVLEVGMSGLGALAVEGESGPLEVSSDLADVWKKAGYAQLAEVMVLELRLMRELVAAGEVSLDITQAQFKVTACADSLATFAEIATDFGRLFPNKKEEHVKLPSMGQSINVFDSLDENAFNLLPEIVSHSDTDMIEDDLPHNLDYLDHATRISKHYPSMDRTTGENLRAWHTPEEGLEEGEWENGESGETIRAFGGEIEEEEGYWEGLPILNDVYSADQKPGKIHIRVLDASLKIFLHDGYDWPRTRKAIEDEVRAVRRRLERIRQLLASGQKADESIENATSSVLFNSIYIGLEQKGEMGLSTMGMGKMDEKALMAAIDEELDGMETESGSSWQTLPAGVGAGPSAVHQAHKKTRLKGKRLVRSKKAQIEITLSGIKTDVDLYPTEESTSSRVHFTAKEMEILDHIKTSTWKKFLTEMKADNRGNIRETDADMLRIELVGVRLKEDEEELRLRAKILPLRLHVDQDALDFLKRFFSFKAPPMTSARPLAQHTTSSTPDLYFQHVEIFPIQLKLDYKPKRVDFRALREGKTIELMNFFHFEGAEMTLRHITLSGITGLERLGTTLQDLWTPDVKANQLADVISGVSPIRSMVNVGSGVADLILLPIEQYRKDGRIAKGVQRGTNSFVKSTALEVMKLGARLATGTQVILERAEGVLGGKSGEDVVGQVQGLSTNAFGVDSGMLEGGSSSEDEQEAISRYADQPESMKEGVQAAYKSLSKNVNAAAQTILAVPMEVYERSGDDGPLKAVIRAVPIAVLKPMIGTTEAVSKTLLGMRNSLDPSARRELDDKYK.

In terms of domain architecture, Chorein N-terminal spans Arg30–Thr121. Disordered stretches follow at residues Gln286–Tyr319 and Leu360–Val412. The segment covering Ser303–Ser315 has biased composition (low complexity). Residues Glu397–Gln406 show a composition bias toward polar residues.

It belongs to the ATG2 family.

The protein resides in the preautophagosomal structure membrane. Its subcellular location is the endoplasmic reticulum membrane. The catalysed reaction is a 1,2-diacyl-sn-glycero-3-phosphocholine(in) = a 1,2-diacyl-sn-glycero-3-phosphocholine(out). It carries out the reaction a 1,2-diacyl-sn-glycero-3-phospho-L-serine(in) = a 1,2-diacyl-sn-glycero-3-phospho-L-serine(out). It catalyses the reaction a 1,2-diacyl-sn-glycero-3-phosphoethanolamine(in) = a 1,2-diacyl-sn-glycero-3-phosphoethanolamine(out). Functionally, lipid transfer protein required for autophagosome completion and peroxisome degradation. Tethers the edge of the isolation membrane (IM) to the endoplasmic reticulum (ER) and mediates direct lipid transfer from ER to IM for IM expansion. ATG2 binds to the ER exit site (ERES), which is the membrane source for autophagosome formation, using basic residues in its N-terminal region (NR) and to the expanding edge of the IM through its C-terminal region. The latter binding is assisted by an ATG18-PtdIns3P interaction. ATG2 then extracts phospholipids from the membrane source using its NR and transfers them to ATG9 to the IM through its predicted beta-sheet-rich structure for membrane expansion. This chain is Autophagy-related protein 2 (ATG2), found in Cryptococcus neoformans var. neoformans serotype D (strain JEC21 / ATCC MYA-565) (Filobasidiella neoformans).